The primary structure comprises 271 residues: Large ribosomal subunit protein uL3c (271 aa).

The transit peptide at M1 to S49 directs the protein to the chloroplast. The segment at H190–G222 is disordered.

Belongs to the universal ribosomal protein uL3 family. As to quaternary structure, part of the 50S ribosomal subunit.

The protein resides in the plastid. It is found in the chloroplast. Its function is as follows. One of the primary rRNA binding proteins, it binds directly near the 3'-end of the 23S rRNA, where it nucleates assembly of the 50S subunit. The protein is Large ribosomal subunit protein uL3c (RPL3A) of Arabidopsis thaliana (Mouse-ear cress).